Here is a 375-residue protein sequence, read N- to C-terminus: Succinyl-diaminopimelate desuccinylase (375 aa).

Residue H66 participates in Zn(2+) binding. D68 is an active-site residue. Position 99 (D99) interacts with Zn(2+). E133 acts as the Proton acceptor in catalysis. Zn(2+) contacts are provided by E134, E162, and H348.

This sequence belongs to the peptidase M20A family. DapE subfamily. As to quaternary structure, homodimer. Zn(2+) is required as a cofactor. It depends on Co(2+) as a cofactor.

It carries out the reaction N-succinyl-(2S,6S)-2,6-diaminopimelate + H2O = (2S,6S)-2,6-diaminopimelate + succinate. Its pathway is amino-acid biosynthesis; L-lysine biosynthesis via DAP pathway; LL-2,6-diaminopimelate from (S)-tetrahydrodipicolinate (succinylase route): step 3/3. In terms of biological role, catalyzes the hydrolysis of N-succinyl-L,L-diaminopimelic acid (SDAP), forming succinate and LL-2,6-diaminopimelate (DAP), an intermediate involved in the bacterial biosynthesis of lysine and meso-diaminopimelic acid, an essential component of bacterial cell walls. The polypeptide is Succinyl-diaminopimelate desuccinylase (Shigella sonnei (strain Ss046)).